Reading from the N-terminus, the 93-residue chain is NAD(P)H-quinone oxidoreductase subunit 4L, chloroplastic (93 aa).

Helical transmembrane passes span 1-21 (MLEHALIAGAFSFCIGISGLI) and 60-80 (IFAIFVIAIAAAEAAIGLSIA).

The protein belongs to the complex I subunit 4L family. NDH is composed of at least 16 different subunits, 5 of which are encoded in the nucleus.

It is found in the plastid. The protein localises to the chloroplast thylakoid membrane. It catalyses the reaction a plastoquinone + NADH + (n+1) H(+)(in) = a plastoquinol + NAD(+) + n H(+)(out). The enzyme catalyses a plastoquinone + NADPH + (n+1) H(+)(in) = a plastoquinol + NADP(+) + n H(+)(out). Functionally, NDH shuttles electrons from NAD(P)H:plastoquinone, via FMN and iron-sulfur (Fe-S) centers, to quinones in the photosynthetic chain and possibly in a chloroplast respiratory chain. The immediate electron acceptor for the enzyme in this species is believed to be plastoquinone. Couples the redox reaction to proton translocation, and thus conserves the redox energy in a proton gradient. In Anthoceros angustus (Hornwort), this protein is NAD(P)H-quinone oxidoreductase subunit 4L, chloroplastic.